Here is a 435-residue protein sequence, read N- to C-terminus: Protein translocase subunit SecY (435 aa).

10 consecutive transmembrane segments (helical) span residues Ile19–Gly39, Phe68–Leu88, Tyr116–Leu136, Val147–Leu167, Gly179–Ile199, Phe216–Val236, Val269–Val289, Ile311–Val331, Val372–Gly392, and Asp395–Met415.

The protein belongs to the SecY/SEC61-alpha family. As to quaternary structure, component of the Sec protein translocase complex. Heterotrimer consisting of SecY, SecE and SecG subunits. The heterotrimers can form oligomers, although 1 heterotrimer is thought to be able to translocate proteins. Interacts with the ribosome. Interacts with SecDF, and other proteins may be involved. Interacts with SecA.

The protein resides in the cell membrane. The central subunit of the protein translocation channel SecYEG. Consists of two halves formed by TMs 1-5 and 6-10. These two domains form a lateral gate at the front which open onto the bilayer between TMs 2 and 7, and are clamped together by SecE at the back. The channel is closed by both a pore ring composed of hydrophobic SecY resides and a short helix (helix 2A) on the extracellular side of the membrane which forms a plug. The plug probably moves laterally to allow the channel to open. The ring and the pore may move independently. In Streptococcus sanguinis (strain SK36), this protein is Protein translocase subunit SecY.